The following is a 500-amino-acid chain: Probable malate:quinone oxidoreductase (500 aa).

The protein belongs to the MQO family. The cofactor is FAD.

The catalysed reaction is (S)-malate + a quinone = a quinol + oxaloacetate. The protein operates within carbohydrate metabolism; tricarboxylic acid cycle; oxaloacetate from (S)-malate (quinone route): step 1/1. The chain is Probable malate:quinone oxidoreductase from Gluconobacter oxydans (strain 621H) (Gluconobacter suboxydans).